The primary structure comprises 144 residues: L-fucose mutarotase (144 aa).

Histidine 22 (proton donor) is an active-site residue. Substrate-binding positions include aspartate 30, arginine 109, and 131-133; that span reads YGN.

The protein belongs to the RbsD / FucU family. FucU mutarotase subfamily. In terms of assembly, homodecamer.

It localises to the cytoplasm. It catalyses the reaction alpha-L-fucose = beta-L-fucose. The protein operates within carbohydrate metabolism; L-fucose metabolism. Functionally, involved in the anomeric conversion of L-fucose. This is L-fucose mutarotase from Histophilus somni (strain 129Pt) (Haemophilus somnus).